Consider the following 545-residue polypeptide: Membrane protein insertase YidC (545 aa).

Transmembrane regions (helical) follow at residues 10–30, 319–339, 341–361, 407–427, 467–487, and 502–522; these read AIYL…IFFS, LLYF…NVIP, WGLS…PLTF, LGGC…YGLV, ILPF…SNVS, and MPIM…IYWI.

This sequence belongs to the OXA1/ALB3/YidC family. Type 1 subfamily. In terms of assembly, interacts with the Sec translocase complex via SecD. Specifically interacts with transmembrane segments of nascent integral membrane proteins during membrane integration.

The protein localises to the cell inner membrane. Its function is as follows. Required for the insertion and/or proper folding and/or complex formation of integral membrane proteins into the membrane. Involved in integration of membrane proteins that insert both dependently and independently of the Sec translocase complex, as well as at least some lipoproteins. Aids folding of multispanning membrane proteins. This is Membrane protein insertase YidC from Borrelia hermsii (strain HS1 / DAH).